Consider the following 135-residue polypeptide: U-scoloptoxin(22)-Er1a (135 aa).

Positions 1 to 24 (MAVILKHLAIILLVFVIEIKMGQG) are cleaved as a signal peptide. The interval 61-135 (PQITFSTDWG…RSPRYLPTII (75 aa)) is disordered. Residues 75-127 (SVNEDREAAERERSPQMKRSEHEEQLMAKDEMKRFQEERNPSSDDKIAIDKRS) show a composition bias toward basic and acidic residues.

This sequence belongs to the scoloptoxin-22 family. In terms of tissue distribution, expressed by the venom gland.

Its subcellular location is the secreted. The chain is U-scoloptoxin(22)-Er1a from Ethmostigmus rubripes (Giant centipede).